A 455-amino-acid chain; its full sequence is MLINKTKRAEQNLNNLPFLALQAEQIEFLGSSAEFKTQIIELIRNAKKRIYVTALYWQKDEAGQEILDEIYRVKQENPHLDVKVLIDWHRAQRNLLGAEKSATNADWYCEQRQTYQLPDDPNMFFGVPINTREVFGVLHVKGFVFDDTVLYSGASINNVYLHQFEKYRYDRYQKITHAELADSMVNFINDYLLDFSAVYPLDVTNRPRTKEIRGNIRAYRKDLAQNGEYSLKSAVKLPNVLSVSPLFGLGASGNELNQVIEDLFLQVQKKLVICTPYFNFPRTLQHKIATLLENGKRVEIIVGDKVANDFYIPPEQPFKMAGALPYLYESNLRRFCEKFETQIESGQLVVRLWRDGDNTYHLKGVWVDDRYILLTGNNLNPRAWRLDAENGLLIYDPQQQLLAQVEKEQNQIRQHTKVLKHYTELEELNQYPEPVQKLLKKFARIKADKLVKMIL.

2 PLD phosphodiesterase domains span residues 134 to 160 (VFGV…NNVY) and 356 to 383 (GDNT…NPRA).

The protein belongs to the CDP-alcohol phosphatidyltransferase class-II family. In terms of assembly, multimeric.

The protein localises to the cytoplasm. The protein resides in the cell inner membrane. The enzyme catalyses a CDP-1,2-diacyl-sn-glycerol + L-serine = a 1,2-diacyl-sn-glycero-3-phospho-L-serine + CMP + H(+). The polypeptide is CDP-diacylglycerol--serine O-phosphatidyltransferase (pssA) (Haemophilus influenzae (strain ATCC 51907 / DSM 11121 / KW20 / Rd)).